The sequence spans 285 residues: Elongation factor Ts (285 aa).

The interval 82-85 (TDFV) is involved in Mg(2+) ion dislocation from EF-Tu.

It belongs to the EF-Ts family.

The protein resides in the cytoplasm. In terms of biological role, associates with the EF-Tu.GDP complex and induces the exchange of GDP to GTP. It remains bound to the aminoacyl-tRNA.EF-Tu.GTP complex up to the GTP hydrolysis stage on the ribosome. In Sodalis glossinidius (strain morsitans), this protein is Elongation factor Ts.